The chain runs to 274 residues: Large ribosomal subunit protein uL2 (274 aa).

Disordered regions lie at residues serine 40–lysine 59 and valine 223–arginine 274. Composition is skewed to basic residues over residues valine 49–lysine 59 and tyrosine 256–arginine 274.

The protein belongs to the universal ribosomal protein uL2 family. As to quaternary structure, part of the 50S ribosomal subunit. Forms a bridge to the 30S subunit in the 70S ribosome.

Its function is as follows. One of the primary rRNA binding proteins. Required for association of the 30S and 50S subunits to form the 70S ribosome, for tRNA binding and peptide bond formation. It has been suggested to have peptidyltransferase activity; this is somewhat controversial. Makes several contacts with the 16S rRNA in the 70S ribosome. This is Large ribosomal subunit protein uL2 from Acidithiobacillus ferrooxidans (strain ATCC 23270 / DSM 14882 / CIP 104768 / NCIMB 8455) (Ferrobacillus ferrooxidans (strain ATCC 23270)).